Here is a 601-residue protein sequence, read N- to C-terminus: Aspartate--tRNA(Asp/Asn) ligase (601 aa).

Position 187 (Glu187) interacts with L-aspartate. Residues 211 to 214 form an aspartate region; sequence QQFK. Positions 233 and 461 each coordinate L-aspartate. 233 to 235 serves as a coordination point for ATP; that stretch reads RDE. Glu495 contacts ATP. Arg502 contacts L-aspartate. Residue 547–550 coordinates ATP; the sequence is GLDR.

Belongs to the class-II aminoacyl-tRNA synthetase family. Type 1 subfamily. Homodimer.

Its subcellular location is the cytoplasm. The enzyme catalyses tRNA(Asx) + L-aspartate + ATP = L-aspartyl-tRNA(Asx) + AMP + diphosphate. Aspartyl-tRNA synthetase with relaxed tRNA specificity since it is able to aspartylate not only its cognate tRNA(Asp) but also tRNA(Asn). Reaction proceeds in two steps: L-aspartate is first activated by ATP to form Asp-AMP and then transferred to the acceptor end of tRNA(Asp/Asn). This Pelodictyon phaeoclathratiforme (strain DSM 5477 / BU-1) protein is Aspartate--tRNA(Asp/Asn) ligase.